A 239-amino-acid chain; its full sequence is Phosphoribosylaminoimidazole-succinocarboxamide synthase (239 aa).

It belongs to the SAICAR synthetase family.

It carries out the reaction 5-amino-1-(5-phospho-D-ribosyl)imidazole-4-carboxylate + L-aspartate + ATP = (2S)-2-[5-amino-1-(5-phospho-beta-D-ribosyl)imidazole-4-carboxamido]succinate + ADP + phosphate + 2 H(+). The protein operates within purine metabolism; IMP biosynthesis via de novo pathway; 5-amino-1-(5-phospho-D-ribosyl)imidazole-4-carboxamide from 5-amino-1-(5-phospho-D-ribosyl)imidazole-4-carboxylate: step 1/2. This chain is Phosphoribosylaminoimidazole-succinocarboxamide synthase, found in Bacillus thuringiensis subsp. konkukian (strain 97-27).